Reading from the N-terminus, the 345-residue chain is Platelet-derived growth factor C (345 aa).

The N-terminal stretch at 1 to 22 (MSLFGLLLLTSALAGQRQGTQA) is a signal peptide. N-linked (GlcNAc...) asparagine glycosylation is found at N25 and N55. Positions 46 to 163 (HERIITVSTN…PGFCIHYNIV (118 aa)) constitute a CUB domain. 4 cysteine pairs are disulfide-bonded: C104–C124, C250–C294, C280–C335, and C287–C337.

The protein belongs to the PDGF/VEGF growth factor family. Homodimer; disulfide-linked. Interacts with PDGFRA homodimers, and with heterodimers formed by PDGFRA and PDGFRB. Interacts (via CUB domain) with PLAT (via kringle domain). Post-translationally, proteolytic removal of the N-terminal CUB domain releasing the core domain is necessary for unmasking the receptor-binding epitopes of the core domain. Cleavage after basic residues in the hinge region (region connecting the CUB and growth factor domains) gives rise to the receptor-binding form. Cleaved by PLAT and PLG. In terms of processing, sumoylated with SUMO1. N-glycosylated. Expressed in the fallopian tube, vascular smooth muscle cells in kidney, breast and colon and in visceral smooth muscle of the gastrointestinal tract. Highly expressed in retinal pigment epithelia. Expressed in medulloblastoma. In the kidney, constitutively expressed in parietal epithelial cells of Bowman's capsule, tubular epithelial cells and in arterial endothelial cells (at protein level). Highly expressed in the platelets, prostate, testis and uterus. Higher expression is observed in uterine leiomyomata. Weaker expression in the spleen, thymus, heart, pancreas, liver, ovary cells and small intestine, and negligible expression in the colon and peripheral blood leukocytes.

The protein resides in the cytoplasm. It is found in the cytosol. Its subcellular location is the secreted. The protein localises to the nucleus. It localises to the cytoplasmic granule. The protein resides in the cell membrane. In terms of biological role, growth factor that plays an essential role in the regulation of embryonic development, cell proliferation, cell migration, survival and chemotaxis. Potent mitogen and chemoattractant for cells of mesenchymal origin. Required for normal skeleton formation during embryonic development, especially for normal development of the craniofacial skeleton and for normal development of the palate. Required for normal skin morphogenesis during embryonic development. Plays an important role in wound healing, where it appears to be involved in three stages: inflammation, proliferation and remodeling. Plays an important role in angiogenesis and blood vessel development. Involved in fibrotic processes, in which transformation of interstitial fibroblasts into myofibroblasts plus collagen deposition occurs. The CUB domain has mitogenic activity in coronary artery smooth muscle cells, suggesting a role beyond the maintenance of the latency of the PDGF domain. In the nucleus, PDGFC seems to have additional function. The sequence is that of Platelet-derived growth factor C (PDGFC) from Homo sapiens (Human).